The primary structure comprises 97 residues: Ferredoxin-like protein YdiT (97 aa).

The protein belongs to the bacterial-type ferredoxin family. FixX subfamily.

Could be a 3Fe-4S cluster-containing protein. Probably participates in a redox process with YdiQ, YdiR and YdiS. The protein is Ferredoxin-like protein YdiT (ydiT) of Escherichia coli (strain K12).